The primary structure comprises 523 residues: Glycerate kinase (523 aa).

Ser-60 is modified (phosphoserine). Lys-200 bears the N6-acetyllysine mark.

Belongs to the glycerate kinase type-2 family.

It is found in the cytoplasm. It carries out the reaction (R)-glycerate + ATP = (2R)-3-phosphoglycerate + ADP + H(+). The protein is Glycerate kinase (Glyctk) of Rattus norvegicus (Rat).